The following is a 332-amino-acid chain: Olfactory receptor 10G6 (332 aa).

Over 1 to 46 the chain is Extracellular; it reads MLEGVEHLLLLLLLTDVNSKELQSGNQTSVSHFILVGLHHPPQLGA. N-linked (GlcNAc...) asparagine glycosylation occurs at N26. A helical transmembrane segment spans residues 47 to 67; the sequence is PLFLAFLVIYLLTVSGNGLII. Topologically, residues 68 to 75 are cytoplasmic; the sequence is LTVLVDIR. The helical transmembrane segment at 76–96 threads the bilayer; it reads LHRPMCLFLCHLSFLDMTISC. The Extracellular segment spans residues 97–120; the sequence is AIVPKMLAGFLLGSRIISFGGCVI. Residues C118 and C210 are joined by a disulfide bond. A helical transmembrane segment spans residues 121-141; sequence QLFSFHFLGCTECFLYTLMAY. Over 142–160 the chain is Cytoplasmic; sequence DRFLAICKPLHYATIMTHR. The chain crosses the membrane as a helical span at residues 161–181; the sequence is VCNSLALGTWLGGTIHSLFQT. Over 182 to 218 the chain is Extracellular; the sequence is SFVFRLPFCGPNRVDYIFCDIPAMLRLACADTAINEL. A helical transmembrane segment spans residues 219–238; that stretch reads VTFADIGFLALTCFMLILTS. At 239–258 the chain is on the cytoplasmic side; sequence YGYIVAAILRIPSADGRRNA. A helical membrane pass occupies residues 259–279; the sequence is FSTCAAHLTVVIVYYVPCTFI. Topologically, residues 280-290 are extracellular; that stretch reads YLRPCSQEPLD. A helical transmembrane segment spans residues 291 to 311; that stretch reads GVVAVFYTVITPLLNSIIYTL. Residues 312–332 are Cytoplasmic-facing; it reads CNKEMKAALQRLGGHKEVQPH.

The protein belongs to the G-protein coupled receptor 1 family.

It is found in the cell membrane. In terms of biological role, odorant receptor. The chain is Olfactory receptor 10G6 (OR10G6) from Homo sapiens (Human).